The primary structure comprises 699 residues: tRNA 5-methylaminomethyl-2-thiouridine biosynthesis bifunctional protein MnmC (699 aa).

Residues 1 to 260 (MTAKPHISCQ…ERKLLRQQAN (260 aa)) form a tRNA (mnm(5)s(2)U34)-methyltransferase region. The tract at residues 282–699 (IGGGLASAHL…LRKLLKGKAL (418 aa)) is FAD-dependent cmnm(5)s(2)U34 oxidoreductase.

In the N-terminal section; belongs to the methyltransferase superfamily. tRNA (mnm(5)s(2)U34)-methyltransferase family. It in the C-terminal section; belongs to the DAO family. FAD serves as cofactor.

The protein localises to the cytoplasm. It catalyses the reaction 5-aminomethyl-2-thiouridine(34) in tRNA + S-adenosyl-L-methionine = 5-methylaminomethyl-2-thiouridine(34) in tRNA + S-adenosyl-L-homocysteine + H(+). Its function is as follows. Catalyzes the last two steps in the biosynthesis of 5-methylaminomethyl-2-thiouridine (mnm(5)s(2)U) at the wobble position (U34) in tRNA. Catalyzes the FAD-dependent demodification of cmnm(5)s(2)U34 to nm(5)s(2)U34, followed by the transfer of a methyl group from S-adenosyl-L-methionine to nm(5)s(2)U34, to form mnm(5)s(2)U34. The protein is tRNA 5-methylaminomethyl-2-thiouridine biosynthesis bifunctional protein MnmC of Shewanella oneidensis (strain ATCC 700550 / JCM 31522 / CIP 106686 / LMG 19005 / NCIMB 14063 / MR-1).